A 274-amino-acid polypeptide reads, in one-letter code: Large ribosomal subunit protein uL2 (274 aa).

A disordered region spans residues 221-274 (RGTAMNPVDHPHGGGEGRNFGKHPVTPWGVQTKGKKTRSNKRTDKFIVRRRSKK).

This sequence belongs to the universal ribosomal protein uL2 family. As to quaternary structure, part of the 50S ribosomal subunit. Forms a bridge to the 30S subunit in the 70S ribosome.

Functionally, one of the primary rRNA binding proteins. Required for association of the 30S and 50S subunits to form the 70S ribosome, for tRNA binding and peptide bond formation. It has been suggested to have peptidyltransferase activity; this is somewhat controversial. Makes several contacts with the 16S rRNA in the 70S ribosome. The protein is Large ribosomal subunit protein uL2 of Yersinia pseudotuberculosis serotype O:1b (strain IP 31758).